Here is a 555-residue protein sequence, read N- to C-terminus: DNA-directed primase/polymerase protein (555 aa).

Positions 1-22 (MKRKWEATLKQIEERASHYERK) form a coiled coil. Residues Arg76, 114-116 (DLE), and 165-169 (KFSRH) each bind substrate. The Mn(2+) site is built by Asp114 and Glu116. Residues 210–230 (ETTGHEFTHFSETPSEQGTCF) are disordered. The span at 219 to 230 (FSETPSEQGTCF) shows a compositional bias: polar residues. Ser255 bears the Phosphoserine mark. Residues 288 to 291 (RNFR) and Lys297 each bind substrate. Cys418, His425, Cys445, and Cys450 together coordinate Zn(2+). A Zinc knuckle motif motif is present at residues 418–451 (CENIGRAHRSNNIMILVDLKNEVWYQKCHDPVCK). The disordered stretch occupies residues 480-503 (TDTTADTETKSPHGPSSSVLSKGA). Residues 480–555 (TDTTADTETK…DELLIEVLQE (76 aa)) are interaction with RPA1. Short sequence motifs (RPA1-binding motif) lie at residues 509-523 (WDNG…EATE) and 543-551 (EIPDELLIE).

This sequence belongs to the eukaryotic-type primase small subunit family. As to quaternary structure, interacts with RPA1; leading to recruitment to chromatin and stimulate DNA primase activity. Interacts with SSBP1. Interacts with POLDIP2; leading to enhance DNA polymerase activity. It depends on Mn(2+) as a cofactor.

Its subcellular location is the nucleus. It is found in the mitochondrion matrix. It localises to the chromosome. It catalyses the reaction ssDNA + n NTP = ssDNA/pppN(pN)n-1 hybrid + (n-1) diphosphate.. The enzyme catalyses DNA(n) + a 2'-deoxyribonucleoside 5'-triphosphate = DNA(n+1) + diphosphate. In terms of biological role, DNA primase and DNA polymerase required to tolerate replication-stalling lesions by bypassing them. Required to facilitate mitochondrial and nuclear replication fork progression by initiating de novo DNA synthesis using dNTPs and acting as an error-prone DNA polymerase able to bypass certain DNA lesions. Shows a high capacity to tolerate DNA damage lesions such as 8oxoG and abasic sites in DNA. Provides different translesion synthesis alternatives when DNA replication is stalled: able to synthesize DNA primers downstream of lesions, such as ultraviolet (UV) lesions, R-loops and G-quadruplexes, to allow DNA replication to continue. Can also realign primers ahead of 'unreadable lesions' such as abasic sites and 6-4 photoproduct (6-4 pyrimidine-pyrimidinone), thereby skipping the lesion. Repriming avoids fork degradation while leading to accumulation of internal ssDNA gaps behind the forks. Also able to incorporate nucleotides opposite DNA lesions such as 8oxoG, like a regular translesion synthesis DNA polymerase. Also required for reinitiating stalled forks after UV damage during nuclear DNA replication. Required for mitochondrial DNA (mtDNA) synthesis and replication, by reinitiating synthesis after UV damage or in the presence of chain-terminating nucleotides. Prevents APOBEC family-mediated DNA mutagenesis by repriming downstream of abasic site to prohibit error-prone translesion synthesis. Has non-overlapping function with POLH. In addition to its role in DNA damage response, also required to maintain efficient nuclear and mitochondrial DNA replication in unperturbed cells. The protein is DNA-directed primase/polymerase protein of Bos taurus (Bovine).